Consider the following 373-residue polypeptide: Anhydro-N-acetylmuramic acid kinase (373 aa).

13–20 contacts ATP; it reads GTSMDGID.

This sequence belongs to the anhydro-N-acetylmuramic acid kinase family.

It carries out the reaction 1,6-anhydro-N-acetyl-beta-muramate + ATP + H2O = N-acetyl-D-muramate 6-phosphate + ADP + H(+). It participates in amino-sugar metabolism; 1,6-anhydro-N-acetylmuramate degradation. The protein operates within cell wall biogenesis; peptidoglycan recycling. Functionally, catalyzes the specific phosphorylation of 1,6-anhydro-N-acetylmuramic acid (anhMurNAc) with the simultaneous cleavage of the 1,6-anhydro ring, generating MurNAc-6-P. Is required for the utilization of anhMurNAc either imported from the medium or derived from its own cell wall murein, and thus plays a role in cell wall recycling. This Brucella abortus (strain 2308) protein is Anhydro-N-acetylmuramic acid kinase.